Consider the following 149-residue polypeptide: UPF0310 protein SSO2595 (149 aa).

It belongs to the UPF0310 family.

This is UPF0310 protein SSO2595 from Saccharolobus solfataricus (strain ATCC 35092 / DSM 1617 / JCM 11322 / P2) (Sulfolobus solfataricus).